Consider the following 587-residue polypeptide: Beta-(1--&gt;2)glucan export ATP-binding/permease protein NdvA (587 aa).

Residues 21 to 301 form the ABC transmembrane type-1 domain; that stretch reads VSLVVVANIV…MRQFATQIFE (281 aa). The next 6 helical transmembrane spans lie at 23–43, 57–77, 128–148, 158–178, 248–268, and 272–292; these read LVVV…ILFG, PILF…VLVA, GLWL…ALLI, LSAV…VVMS, MAST…VQAG, and VGDV…LDLM. Residues 335–569 form the ABC transporter domain; that stretch reads IEFRDVSFGF…NGRFAALLRA (235 aa). Position 368–375 (368–375) interacts with ATP; that stretch reads GPTGAGKT.

Belongs to the ABC transporter superfamily. Beta-(1--&gt;2)glucan exporter (TC 3.A.1.108.1) family. In terms of assembly, homodimer.

The protein resides in the cell inner membrane. It catalyses the reaction [(1-&gt;2)-beta-D-glucosyl](n)(in) + ATP + H2O = [(1-&gt;2)-beta-D-glucosyl](n)(out) + ADP + phosphate + H(+). In terms of biological role, involved in beta-(1--&gt;2)glucan export. Transmembrane domains (TMD) form a pore in the inner membrane and the ATP-binding domain (NBD) is responsible for energy generation. The polypeptide is Beta-(1--&gt;2)glucan export ATP-binding/permease protein NdvA (Rhizobium johnstonii (strain DSM 114642 / LMG 32736 / 3841) (Rhizobium leguminosarum bv. viciae)).